A 61-amino-acid polypeptide reads, in one-letter code: Putative antitoxin PYRAB11980 (61 aa).

This sequence belongs to the UPF0165 family.

Functionally, possibly the antitoxin component of a type II toxin-antitoxin (TA) system. The polypeptide is Putative antitoxin PYRAB11980 (Pyrococcus abyssi (strain GE5 / Orsay)).